Here is a 157-residue protein sequence, read N- to C-terminus: Arginine regulator (157 aa).

This sequence belongs to the ArgR family.

The protein resides in the cytoplasm. It functions in the pathway amino-acid degradation; L-arginine degradation via ADI pathway. Functionally, regulates the transcription of the arc operon, involved in arginine catabolism. The sequence is that of Arginine regulator (argR1) from Streptococcus pyogenes serotype M3 (strain SSI-1).